A 358-amino-acid polypeptide reads, in one-letter code: L-tryptophan methyltransferase trpM (358 aa).

It belongs to the methyltransferase superfamily.

The enzyme catalyses L-tryptophan + S-adenosyl-L-methionine = N(alpha)-methyl-L-tryptophan + S-adenosyl-L-homocysteine + H(+). It catalyses the reaction N(alpha)-methyl-L-tryptophan + S-adenosyl-L-methionine = N(alpha),N(alpha)-dimethyl-L-tryptophan + S-adenosyl-L-homocysteine + H(+). It carries out the reaction N(alpha),N(alpha)-dimethyl-L-tryptophan + S-adenosyl-L-methionine = N(alpha),N(alpha),N(alpha)-trimethyl-L-tryptophan + S-adenosyl-L-homocysteine + H(+). Methyltransferase that catalyzes iterative L-tryptophan N-methylations to produce L-abrine (N-alpha-methyl-L-tryptophan) and N,N-alpha-dimethyl-L-tryptophan. Also catalyzes a third methylation to yield L-hypaphorine (N,N,N-alpha-trimethyl-L-tryptopan), an agonist of the phytohormone indole-3-acetic acid. Can also N-methylate the non-native amino acid substrate 4-hydroxytryptophan, but the ability to incorporate trpM into a functional psilocybin biosynthesis pathway is indeed thwarted by the inability of the L-tryptophan decarboxylase psiD to use N,N-dimethyl-4-hydroxytryptophan as substrate. This chain is L-tryptophan methyltransferase trpM, found in Psilocybe serbica.